Consider the following 67-residue polypeptide: Large ribosomal subunit protein eL24 (67 aa).

Zn(2+) is bound by residues cysteine 7, cysteine 10, cysteine 33, and cysteine 37. The C4-type zinc-finger motif lies at 7 to 37 (CSYCGKEFEPGTGKMYVRNDGRVYFFCSRKC).

It belongs to the eukaryotic ribosomal protein eL24 family. In terms of assembly, part of the 50S ribosomal subunit. Forms a cluster with proteins L3 and L14. Requires Zn(2+) as cofactor.

In terms of biological role, binds to the 23S rRNA. In Thermococcus sibiricus (strain DSM 12597 / MM 739), this protein is Large ribosomal subunit protein eL24.